A 571-amino-acid chain; its full sequence is Phosphoribosylaminoimidazole carboxylase (571 aa).

Serine 37 is modified (phosphoserine). The ATP-grasp domain occupies 110–298 (KEHLIKNGIA…QFEAHLRSIL (189 aa)). Residue 138-193 (GRDLGFPFVLKSRTLAYDGRGNFVVKNKEMIPEALEVLKDRPLYAEKWAPFTKELA) coordinates ATP.

This sequence in the C-terminal section; belongs to the AIR carboxylase family. Class I subfamily.

The enzyme catalyses 5-amino-1-(5-phospho-D-ribosyl)imidazole-4-carboxylate + H(+) = 5-amino-1-(5-phospho-beta-D-ribosyl)imidazole + CO2. The protein operates within purine metabolism; IMP biosynthesis via de novo pathway; 5-amino-1-(5-phospho-D-ribosyl)imidazole-4-carboxylate from 5-amino-1-(5-phospho-D-ribosyl)imidazole (carboxylase route): step 1/1. The polypeptide is Phosphoribosylaminoimidazole carboxylase (ADE2) (Saccharomyces cerevisiae (strain ATCC 204508 / S288c) (Baker's yeast)).